A 222-amino-acid chain; its full sequence is Pyridoxal phosphate homeostasis protein (222 aa).

At lysine 35 the chain carries N6-(pyridoxal phosphate)lysine.

It belongs to the pyridoxal phosphate-binding protein YggS/PROSC family.

Its function is as follows. Pyridoxal 5'-phosphate (PLP)-binding protein, which is involved in PLP homeostasis. The polypeptide is Pyridoxal phosphate homeostasis protein (Helicobacter pylori (strain J99 / ATCC 700824) (Campylobacter pylori J99)).